Consider the following 201-residue polypeptide: Molybdenum cofactor guanylyltransferase (201 aa).

Residues 15–17 (LAG), K28, D74, and D104 contribute to the GTP site. D104 contributes to the Mg(2+) binding site.

The protein belongs to the MobA family. As to quaternary structure, monomer. Mg(2+) is required as a cofactor.

It localises to the cytoplasm. It catalyses the reaction Mo-molybdopterin + GTP + H(+) = Mo-molybdopterin guanine dinucleotide + diphosphate. Its function is as follows. Transfers a GMP moiety from GTP to Mo-molybdopterin (Mo-MPT) cofactor (Moco or molybdenum cofactor) to form Mo-molybdopterin guanine dinucleotide (Mo-MGD) cofactor. The protein is Molybdenum cofactor guanylyltransferase of Pseudomonas syringae pv. tomato (strain ATCC BAA-871 / DC3000).